Here is a 205-residue protein sequence, read N- to C-terminus: Small ribosomal subunit protein uS4 (205 aa).

Positions 1-16 (MSKRESSKYKIDRRMG) are enriched in basic and acidic residues. The interval 1 to 46 (MSKRESSKYKIDRRMGENIWGRPKSPVNRREYGPGQHGQRRKSKLS) is disordered. The S4 RNA-binding domain occupies 94-157 (SRLDAIVYRA…KQLVTVLEAV (64 aa)).

Belongs to the universal ribosomal protein uS4 family. Part of the 30S ribosomal subunit. Contacts protein S5. The interaction surface between S4 and S5 is involved in control of translational fidelity.

One of the primary rRNA binding proteins, it binds directly to 16S rRNA where it nucleates assembly of the body of the 30S subunit. In terms of biological role, with S5 and S12 plays an important role in translational accuracy. The polypeptide is Small ribosomal subunit protein uS4 (Rhizobium meliloti (strain 1021) (Ensifer meliloti)).